The sequence spans 192 residues: uncharacterized protein (192 aa).

6 helical membrane-spanning segments follow: residues 5–22, 42–61, 66–88, 101–118, 122–139, and 159–181; these read VPPL…GIGL, FLFL…HYVY, LRFL…SGKL, WGLL…ALNL, LVMW…STIL, and ALLL…LWLF.

The protein localises to the cell membrane. This is an uncharacterized protein from Treponema pallidum (strain Nichols).